The chain runs to 599 residues: MTIEDLPDIPLEGSSLIGRYPFLFTGSDTSVIFSISAAPMPSDCEFSFFDPNDASCQEILFDPKTSVSELFAILRQWVPQVQQNIDIIGNEILKRGCNVNDRDGLTDMTLLHYTCKSGAHGIGDVETAVKFAAQLIDLGADASLRSRWTNMNALHYASYFDVPELIRVLLKTSKPKDVDATCSDFNFGTALHIAAHNLCAGAVKTLLELGANPAFRNDKGQIPADVVPDPVDMPLEMADAAAIAKEIKQMLLDSMPLPCTITKATLPNCDITTSKAMLTTLGLKLGDRVVIAGQKVGTLRFCGTTEFASGQWAGIELDEPEGKNNGSVGRVQYFKCAPKYGIFAPLSKITKVKDGRKNITHTPSTKATLHARSQKVDVAHVTSKVNSGLMTSKKENASESTLSLPRSEELKTVAKNDATQPGCISSSSSTSSLDHKQSHPKKLSTSSSSGKKTLSKSPSLPSRASAGLKSSTTSAANNTHREGALRLGERVLVVGQRVGTIKFFGTTNFAPGYWYGIELEKPHGKNDGSVGGVQYFSCSPRYGIFAPPSRVQRLSDSLDTLSEISSNKQNHSYPGFRRSFSTTSASSQKEINRRNAFAK.

ANK repeat units lie at residues 65 to 101 (TSVS…NVND), 149 to 180 (TNMN…DVDA), and 186 to 215 (NFGT…NPAF). One can recognise a CAP-Gly 1 domain in the interval 303 to 345 (GTTEFASGQWAGIELDEPEGKNNGSVGRVQYFKCAPKYGIFAP). The interval 387–482 (SGLMTSKKEN…TSAANNTHRE (96 aa)) is disordered. Positions 443–462 (LSTSSSSGKKTLSKSPSLPS) are enriched in low complexity. Positions 468–478 (LKSSTTSAANN) are enriched in polar residues. Residues 505 to 547 (GTTNFAPGYWYGIELEKPHGKNDGSVGGVQYFSCSPRYGIFAP) form the CAP-Gly 2 domain. The residue at position 557 (Ser-557) is a Phosphoserine. Residues 565–599 (SSNKQNHSYPGFRRSFSTTSASSQKEINRRNAFAK) are disordered. Residues 576 to 587 (FRRSFSTTSASS) show a composition bias toward low complexity.

The sequence is that of CAP-Gly domain-containing linker protein 4 (Clip4) from Rattus norvegicus (Rat).